A 731-amino-acid chain; its full sequence is T-cell activation Rho GTPase-activating protein (731 aa).

The Rho-GAP domain maps to 88-277 (QPLSIICGDS…FLIDNCFEIF (190 aa)). 3 disordered regions span residues 288 to 421 (TSDD…AEDP), 464 to 507 (SLDA…IKKH), and 641 to 662 (HHVE…GLSP). A compositionally biased stretch (polar residues) spans 299-311 (SDVSTLQNDSAYD). The span at 319 to 329 (SNSSSGISSPS) shows a compositional bias: low complexity. Over residues 380–399 (SMPSSQECLESRVTNQTLTK) the composition is skewed to polar residues. Ser-400 carries the post-translational modification Phosphoserine. The span at 464–480 (SLDASSDSSPVASPSSP) shows a compositional bias: low complexity. Composition is skewed to basic and acidic residues over residues 494-503 (KTEKGKPSRE) and 641-652 (HHVEDSRHRGSK).

Functionally, may function as a GTPase-activating protein and may play important roles during T-cell activation. This is T-cell activation Rho GTPase-activating protein (TAGAP) from Homo sapiens (Human).